A 95-amino-acid polypeptide reads, in one-letter code: Aspartyl/glutamyl-tRNA(Asn/Gln) amidotransferase subunit C (95 aa).

Belongs to the GatC family. As to quaternary structure, heterotrimer of A, B and C subunits.

The enzyme catalyses L-glutamyl-tRNA(Gln) + L-glutamine + ATP + H2O = L-glutaminyl-tRNA(Gln) + L-glutamate + ADP + phosphate + H(+). It catalyses the reaction L-aspartyl-tRNA(Asn) + L-glutamine + ATP + H2O = L-asparaginyl-tRNA(Asn) + L-glutamate + ADP + phosphate + 2 H(+). Functionally, allows the formation of correctly charged Asn-tRNA(Asn) or Gln-tRNA(Gln) through the transamidation of misacylated Asp-tRNA(Asn) or Glu-tRNA(Gln) in organisms which lack either or both of asparaginyl-tRNA or glutaminyl-tRNA synthetases. The reaction takes place in the presence of glutamine and ATP through an activated phospho-Asp-tRNA(Asn) or phospho-Glu-tRNA(Gln). In Azorhizobium caulinodans (strain ATCC 43989 / DSM 5975 / JCM 20966 / LMG 6465 / NBRC 14845 / NCIMB 13405 / ORS 571), this protein is Aspartyl/glutamyl-tRNA(Asn/Gln) amidotransferase subunit C.